The following is a 452-amino-acid chain: UDP-glycosyltransferase 76D1 (452 aa).

UDP-alpha-D-glucose-binding positions include Ser-269, 329–331 (APQ), 346–354 (HGGWNSCLE), and 368–371 (SGDQ).

The protein belongs to the UDP-glycosyltransferase family.

In terms of biological role, possesses low quercetin 7-O-glucosyltransferase activity in vitro. The polypeptide is UDP-glycosyltransferase 76D1 (UGT76D1) (Arabidopsis thaliana (Mouse-ear cress)).